The primary structure comprises 388 residues: Pepsin F (388 aa).

A signal peptide spans 1-15; that stretch reads MKWLGLLGLVALSEC. The propeptide at 16–58 is activation peptide; the sequence is LVTIPLMKVKSMRENLRENDILLDYLEKHPYRPTYKLLSGQQD. The Peptidase A1 domain occupies 74–385; sequence YIGIISIGTP…DRANNRIGLA (312 aa). Asp92 is a catalytic residue. Cystine bridges form between Cys105–Cys110 and Cys266–Cys270. The active site involves Asp275. Cysteines 309 and 343 form a disulfide.

Belongs to the peptidase A1 family.

Its subcellular location is the secreted. The catalysed reaction is Preferential cleavage: hydrophobic, preferably aromatic, residues in P1 and P1' positions. Cleaves 1-Phe-|-Val-2, 4-Gln-|-His-5, 13-Glu-|-Ala-14, 14-Ala-|-Leu-15, 15-Leu-|-Tyr-16, 16-Tyr-|-Leu-17, 23-Gly-|-Phe-24, 24-Phe-|-Phe-25 and 25-Phe-|-Tyr-26 bonds in the B chain of insulin.. In terms of biological role, shows particularly broad specificity; although bonds involving phenylalanine and leucine are preferred, many others are also cleaved to some extent. This is Pepsin F from Oryctolagus cuniculus (Rabbit).